The primary structure comprises 446 residues: Citrate/sodium symporter (446 aa).

The Cytoplasmic portion of the chain corresponds to 1–27 (MTNMSQPPATEKKGVSDLLGFKIFGMP). Residues 28–44 (LPLYAFALITLLLSHFY) traverse the membrane as a helical segment. Residues 45 to 50 (NALPTD) are Periplasmic-facing. A helical membrane pass occupies residues 51 to 71 (IVGGFAIMFIIGAIFGEIGKR). Residues 72-80 (LPIFNKYIG) are Cytoplasmic-facing. Residues 81–95 (GAPVMIFLVAAYFVY) form a helical membrane-spanning segment. Residues 96-115 (AGIFTQKEIDAISNVMDKSN) are Periplasmic-facing. A helical transmembrane segment spans residues 116-130 (FLNLFIAVLITGAIL). The Cytoplasmic segment spans residues 131-136 (SVNRRL). The chain crosses the membrane as a helical span at residues 137–166 (LLKSLLGYIPTILMGIVGASIFGIAIGLVF). Residues 167–181 (GIPVDRIMMLYVLPI) lie on the Periplasmic side of the membrane. Residues Ile181 and Gly183 each coordinate Na(+). The helical intramembrane region spans 182 to 189 (MGGGNGAG). Citrate-binding residues include Asn186 and Gly187. The Periplasmic portion of the chain corresponds to 190–212 (AVPLSEIYHSVTGRSREEYYSTA). A helical transmembrane segment spans residues 213-233 (IAILTIANIFAIVFAAVLDII). Residues 234-264 (GKKHTWLSGEGELVRKASFKVEEDEKTGQIT) are Cytoplasmic-facing. A helical membrane pass occupies residues 265–287 (HRETAVGLVLSTTCFLLAYVVAK). Topologically, residues 288 to 299 (KILPSIGGVAIH) are periplasmic. Residues 300-315 (YFAWMVLIVAALNASG) traverse the membrane as a helical segment. The Cytoplasmic portion of the chain corresponds to 316 to 327 (LCSPEIKAGAKR). The helical transmembrane segment at 328–351 (LSDFFSKQLLWVLMVGVGVCYTDL) threads the bilayer. The Periplasmic segment spans residues 352–359 (QEIINAIT). A helical membrane pass occupies residues 360–381 (FANVVIAAIIVIGAVLGAAIGG). The Cytoplasmic portion of the chain corresponds to 382–398 (WLMGFFPIESAITAGLC). Na(+)-binding residues include Met399 and Asn401. The helical intramembrane region spans 399 to 406 (MANRGGSG). Arg402, Gly404, and Ser405 together coordinate citrate. The Cytoplasmic portion of the chain corresponds to 407 to 416 (DLEVLSACNR). Residues 417 to 438 (MNLISYAQISSRLGGGIVLVIA) form a helical membrane-spanning segment. Residue Arg428 coordinates citrate. The Periplasmic portion of the chain corresponds to 439–446 (SIVFGMMI).

The protein belongs to the 2-hydroxycarboxylate transporter (2-HCT) (TC 2.A.24) family. As to quaternary structure, homodimer.

The protein localises to the cell inner membrane. It carries out the reaction citrate(out) + 2 Na(+)(out) = citrate(in) + 2 Na(+)(in). In the absence of Na(+), transport is inhibited by the thiol reagents N-ethylmaleimide (NEM) and the methanethiosulfonate (MTS) derivatives MTSEA, MTSET and MTSES. However, inactivation by NEM, MTSES and MTSET is prevented by the presence of Na(+). In the absence of Na(+), the substrate citrate has no effect on the inactivation by permeable or impermeable thiol reagents. In contrast, when subsaturating concentrations of Na(+) are present, citrate significantly reduces inactivation, suggesting ordered binding of the substrate and co-ion; citrate is bound after Na(+). The membrane impermeable bulky maleimide AmdiS does not inactivate the transporter in right-side-out membrane vesicles. The apparent affinity for Na(+) decreases with increasing proton concentration. Protons cannot replace Na(+) in the translocation step but the decrease in apparent affinity for Na(+) towards lower pH suggests that protons can compete with Na(+) for the cation-binding sites. Its function is as follows. Secondary active transporter that catalyzes the uptake of citrate across the membrane with the concomitant uptake of sodium. There are conflicting data regarding exact substrate stoichiometry: the sodium/citrate stoichiometry was predicted to be 1, but the latest studies suggest that CitS transports citrate in symport with 2 sodium ions. Transports citrate as a divalent citrate anion, H-citrate(2-). Shows narrow substrate specificity and is very specific, transporting only citrate and to a low extent citromalate. Symport of Na(+) is absolutely required in the range pH 5-7 because no uptake can be detected in the absence of Na(+). Lithium can replace Na(+) in the symport reaction but it takes about a 200-fold higher concentration of Li(+) over Na(+) to achieve the same rate of uptake. This chain is Citrate/sodium symporter, found in Klebsiella pneumoniae.